The sequence spans 276 residues: MAIKKFRPTSPALRQMTVLVSDEITCNQPEKSLLVNLKKNAGRNVHGRITVRHRGGGQKRKYRIIDFKRDKDGIPAKVATIEYDPNRTANIALLNYADGEKRYILAPVGINVGDTILSGLGADIKPGNCLALKDMPVGTIIHNIELKPGKGAQLVRSAGVSAQLMAKEGKNALLRLPSGEMRLVSINCKATIGQVGNIEHGNVVIGKAGRKRHMGIRPTVRGSVMNPNDHPHGGGEGRSPIGRPSPVTPWGKPALGYKTRKKNKASNKLIVSRRTK.

The disordered stretch occupies residues 219 to 276; that stretch reads TVRGSVMNPNDHPHGGGEGRSPIGRPSPVTPWGKPALGYKTRKKNKASNKLIVSRRTK. Positions 258–276 are enriched in basic residues; it reads KTRKKNKASNKLIVSRRTK.

Belongs to the universal ribosomal protein uL2 family. Part of the 50S ribosomal subunit. Forms a bridge to the 30S subunit in the 70S ribosome.

Functionally, one of the primary rRNA binding proteins. Required for association of the 30S and 50S subunits to form the 70S ribosome, for tRNA binding and peptide bond formation. It has been suggested to have peptidyltransferase activity; this is somewhat controversial. Makes several contacts with the 16S rRNA in the 70S ribosome. This chain is Large ribosomal subunit protein uL2, found in Clostridioides difficile (strain 630) (Peptoclostridium difficile).